The primary structure comprises 295 residues: Probable protein phosphatase 2C 5 (295 aa).

Positions 23 to 294 constitute a PPM-type phosphatase domain; that stretch reads QYAATHMQGW…DNMTCILVLF (272 aa). Positions 57 and 58 each coordinate Mn(2+). A disordered region spans residues 151–170; it reads NRDGKPFDMSKDHKPDDDQE. D237 and D285 together coordinate Mn(2+).

This sequence belongs to the PP2C family. The cofactor is Mg(2+). Mn(2+) serves as cofactor.

Its subcellular location is the membrane. It carries out the reaction O-phospho-L-seryl-[protein] + H2O = L-seryl-[protein] + phosphate. The catalysed reaction is O-phospho-L-threonyl-[protein] + H2O = L-threonyl-[protein] + phosphate. In terms of biological role, enzyme with a broad specificity. This chain is Probable protein phosphatase 2C 5, found in Paramecium tetraurelia.